The primary structure comprises 333 residues: Holliday junction branch migration complex subunit RuvB (333 aa).

The interval 1-181 (MARILDNDLL…FGINGHMEYY (181 aa)) is large ATPase domain (RuvB-L). ATP contacts are provided by residues leucine 20, arginine 21, glycine 62, lysine 65, threonine 66, threonine 67, 128-130 (EDY), arginine 171, tyrosine 181, and arginine 218. A Mg(2+)-binding site is contributed by threonine 66. Residues 130–148 (YYIDIMIGAGETSRSVHLD) form a presensor-1 beta-hairpin region. The segment at 182–252 (ELPDLTEIVE…IADQALTMLD (71 aa)) is small ATPAse domain (RuvB-S). The segment at 255–333 (HEGLDYVDQK…HMGYDYTRDN (79 aa)) is head domain (RuvB-H). Positions 291, 310, 312, and 315 each coordinate DNA.

Belongs to the RuvB family. Homohexamer. Forms an RuvA(8)-RuvB(12)-Holliday junction (HJ) complex. HJ DNA is sandwiched between 2 RuvA tetramers; dsDNA enters through RuvA and exits via RuvB. Only 4 subunits contact one DNA strand at any time. Two adjacent subunits are contacted by domain III of RuvA. An RuvB hexamer assembles on each DNA strand where it exits the tetramer. Each RuvB hexamer is contacted by two RuvA subunits (via domain III) on 2 adjacent RuvB subunits; this complex drives branch migration. In the full resolvosome a probable DNA-RuvA(4)-RuvB(12)-RuvC(2) complex forms which resolves the HJ.

Its subcellular location is the cytoplasm. It catalyses the reaction ATP + H2O = ADP + phosphate + H(+). Its activity is regulated as follows. Binding of domain III of RuvA to a single subunit of the RuvB hexamer activates the ATPase 2 subunits away and nucleotide exchange in the adjacent subunit. In terms of biological role, the RuvA-RuvB-RuvC complex processes Holliday junction (HJ) DNA during genetic recombination and DNA repair, while the RuvA-RuvB complex plays an important role in the rescue of blocked DNA replication forks via replication fork reversal (RFR). Catalyzes branch migration on Holliday junction (HJ) DNA in complex with RuvA from S.typhimurim and ATP. RuvA specifically binds to HJ cruciform DNA, conferring on it an open structure. The RuvB hexamer acts as an ATP-dependent pump, pulling dsDNA into and through the RuvAB complex. Forms 2 homohexamers on either side of HJ DNA bound by 1 or 2 RuvA tetramers; 4 subunits per hexamer contact DNA at a time. Coordinated motions by a converter formed by DNA-disengaged RuvB subunits stimulates ATP hydrolysis and nucleotide exchange. Immobilization of the converter enables RuvB to convert the ATP-contained energy into a lever motion, pulling 2 nucleotides of DNA out of the RuvA tetramer per ATP hydrolyzed, thus driving DNA branch migration. The RuvB motors rotate together with the DNA substrate, which together with the progressing nucleotide cycle forms the mechanistic basis for DNA recombination by continuous branch migration. Branch migration allows RuvC to scan DNA until it finds its consensus sequence, where it cleaves and resolves cruciform DNA. The sequence is that of Holliday junction branch migration complex subunit RuvB from Streptococcus thermophilus (strain ATCC BAA-250 / LMG 18311).